The primary structure comprises 275 residues: NH(3)-dependent NAD(+) synthetase (275 aa).

46–53 (GISGGQDS) is an ATP binding site. D52 serves as a coordination point for Mg(2+). Residue R140 coordinates deamido-NAD(+). T160 is a binding site for ATP. E165 is a Mg(2+) binding site. The deamido-NAD(+) site is built by K173 and D180. Residues K189 and T211 each contribute to the ATP site. 260–261 (HK) lines the deamido-NAD(+) pocket.

Belongs to the NAD synthetase family. As to quaternary structure, homodimer.

It carries out the reaction deamido-NAD(+) + NH4(+) + ATP = AMP + diphosphate + NAD(+) + H(+). It functions in the pathway cofactor biosynthesis; NAD(+) biosynthesis; NAD(+) from deamido-NAD(+) (ammonia route): step 1/1. In terms of biological role, catalyzes the ATP-dependent amidation of deamido-NAD to form NAD. Uses ammonia as a nitrogen source. The protein is NH(3)-dependent NAD(+) synthetase of Salmonella typhi.